The primary structure comprises 533 residues: Putative sel1-like repeat-containing protein L21 (533 aa).

Sel1-like repeat units follow at residues 105-140 (VLSQ…NQGL), 141-172 (SFAQ…QSGY), 173-206 (YLSN…NQGC), 207-242 (NISQ…KQGN), and 243-278 (YFSQ…NCGH).

In Acanthamoeba polyphaga mimivirus (APMV), this protein is Putative sel1-like repeat-containing protein L21.